Consider the following 318-residue polypeptide: Ethylene-responsive transcription factor FZP (318 aa).

Over residues 1 to 15 (MNTRGSGSSSSSSSS) the composition is skewed to low complexity. Disordered regions lie at residues 1 to 59 (MNTR…GRFL) and 158 to 178 (SYGHHHHHHHHHGHGAASGAS). Pro residues predominate over residues 25–37 (PPKPASQPSPPSS). The AP2/ERF DNA-binding region spans 57-114 (RFLGVRRRPWGRYAAEIRDPTTKERHWLGTFDTAQEAALAYDRAALSMKGAQARTNFV). Over residues 160-171 (GHHHHHHHHHGH) the composition is skewed to basic residues.

This sequence belongs to the AP2/ERF transcription factor family. ERF subfamily.

Its subcellular location is the nucleus. Functionally, required to prevent the formation of axillary meristems within the spikelet meristem and permit the subsequent establishment of floral meristem identity. Mediates the transition from spikelet to floret meristem. Determines the transition from panicle branching to spikelet formation. May specify floral organ identity by regulating the class B genes (Agamous-like genes) MADS6 and MADS17, as well as class E genes MADS1, MADS7 and MADS8 in floral meristem. Possesses transactivation activity. The sequence is that of Ethylene-responsive transcription factor FZP from Oryza sativa subsp. japonica (Rice).